A 406-amino-acid polypeptide reads, in one-letter code: 4-hydroxy-3-methylbut-2-en-1-yl diphosphate synthase (ferredoxin) (406 aa).

The [4Fe-4S] cluster site is built by Cys-315, Cys-318, Cys-349, and Glu-356.

The protein belongs to the IspG family. [4Fe-4S] cluster is required as a cofactor.

It catalyses the reaction (2E)-4-hydroxy-3-methylbut-2-enyl diphosphate + 2 oxidized [2Fe-2S]-[ferredoxin] + H2O = 2-C-methyl-D-erythritol 2,4-cyclic diphosphate + 2 reduced [2Fe-2S]-[ferredoxin] + H(+). It functions in the pathway isoprenoid biosynthesis; isopentenyl diphosphate biosynthesis via DXP pathway; isopentenyl diphosphate from 1-deoxy-D-xylulose 5-phosphate: step 5/6. Functionally, converts 2C-methyl-D-erythritol 2,4-cyclodiphosphate (ME-2,4cPP) into 1-hydroxy-2-methyl-2-(E)-butenyl 4-diphosphate. The chain is 4-hydroxy-3-methylbut-2-en-1-yl diphosphate synthase (ferredoxin) from Microcystis aeruginosa (strain NIES-843 / IAM M-2473).